We begin with the raw amino-acid sequence, 50 residues long: Large ribosomal subunit protein bL33 (50 aa).

Belongs to the bacterial ribosomal protein bL33 family.

This is Large ribosomal subunit protein bL33 from Koribacter versatilis (strain Ellin345).